Here is a 268-residue protein sequence, read N- to C-terminus: Mitochondrial distribution and morphology protein 12 (268 aa).

Residues 1-256 form the SMP-LTD domain; sequence MSFEINWQDL…WPSWINLDFN (256 aa). Positions 75-94 are disordered; it reads LPKDKIPEESDSGCQSADGE.

This sequence belongs to the MDM12 family. Component of the ER-mitochondria encounter structure (ERMES) or MDM complex, composed of MMM1, MDM10, MDM12 and MDM34. An MMM1 homodimer associates with one molecule of MDM12 on each side in a pairwise head-to-tail manner, and the SMP-LTD domains of MMM1 and MDM12 generate a continuous hydrophobic tunnel for phospholipid trafficking.

The protein localises to the mitochondrion outer membrane. The protein resides in the endoplasmic reticulum membrane. Its function is as follows. Component of the ERMES/MDM complex, which serves as a molecular tether to connect the endoplasmic reticulum (ER) and mitochondria. Components of this complex are involved in the control of mitochondrial shape and protein biogenesis, and function in nonvesicular lipid trafficking between the ER and mitochondria. MDM12 is required for the interaction of the ER-resident membrane protein MMM1 and the outer mitochondrial membrane-resident beta-barrel protein MDM10. The MDM12-MMM1 subcomplex functions in the major beta-barrel assembly pathway that is responsible for biogenesis of all mitochondrial outer membrane beta-barrel proteins, and acts in a late step after the SAM complex. The MDM10-MDM12-MMM1 subcomplex further acts in the TOM40-specific pathway after the action of the MDM12-MMM1 complex. Essential for establishing and maintaining the structure of mitochondria and maintenance of mtDNA nucleoids. This chain is Mitochondrial distribution and morphology protein 12, found in Lachancea thermotolerans (strain ATCC 56472 / CBS 6340 / NRRL Y-8284) (Yeast).